The sequence spans 106 residues: Iron-sulfur cluster assembly protein CyaY (106 aa).

This sequence belongs to the frataxin family.

Involved in iron-sulfur (Fe-S) cluster assembly. May act as a regulator of Fe-S biogenesis. The chain is Iron-sulfur cluster assembly protein CyaY from Escherichia coli O9:H4 (strain HS).